The sequence spans 133 residues: Hemoglobin subunit alpha-2 (133 aa).

In terms of domain architecture, Globin spans 1 to 133 (NVKAVWEHVK…VKNVLTSRYR (133 aa)). Histidine 50 is an O2 binding site. Residue histidine 79 participates in heme b binding.

This sequence belongs to the globin family. In terms of assembly, minor hemoglobin is a heterotetramer of two alpha-2 chains and two beta-2 chains. In terms of tissue distribution, red blood cells.

Its function is as follows. Involved in oxygen transport from the lung to the various peripheral tissues. In Pleurodeles waltl (Iberian ribbed newt), this protein is Hemoglobin subunit alpha-2.